The sequence spans 286 residues: uncharacterized protein (286 aa).

A run of 2 helical transmembrane segments spans residues 201–221 (VIYS…LCET) and 231–251 (AIIL…YLMM).

It is found in the cell membrane. This is an uncharacterized protein from Methanocaldococcus jannaschii (strain ATCC 43067 / DSM 2661 / JAL-1 / JCM 10045 / NBRC 100440) (Methanococcus jannaschii).